Here is a 181-residue protein sequence, read N- to C-terminus: Peptidyl-tRNA hydrolase 2, mitochondrial (181 aa).

The chain crosses the membrane as a helical span at residues 10 to 32; that stretch reads YLVHPGTLSLAAGVACGMCLGWG. Residues lysine 78, lysine 83, lysine 97, lysine 108, lysine 117, and lysine 179 each participate in a glycyl lysine isopeptide (Lys-Gly) (interchain with G-Cter in ubiquitin) cross-link.

It belongs to the PTH2 family. As to quaternary structure, monomer. In terms of processing, ubiquitinated by PRKN during mitophagy, leading to its degradation and enhancement of mitophagy. Deubiquitinated by USP30.

Its subcellular location is the mitochondrion outer membrane. It carries out the reaction an N-acyl-L-alpha-aminoacyl-tRNA + H2O = an N-acyl-L-amino acid + a tRNA + H(+). Its function is as follows. Peptidyl-tRNA hydrolase which releases tRNAs from the ribosome during protein synthesis. Promotes caspase-independent apoptosis by regulating the function of two transcriptional regulators, AES and TLE1. The protein is Peptidyl-tRNA hydrolase 2, mitochondrial (Ptrh2) of Mus musculus (Mouse).